Here is a 95-residue protein sequence, read N- to C-terminus: NADH-quinone oxidoreductase subunit 11 (95 aa).

3 helical membrane-spanning segments follow: residues 1–21, 25–45, and 59–79; these read MSYL…VLTR, ILVF…LVGF, and MVIA…VAIF.

The protein belongs to the complex I subunit 4L family. NDH-1 is composed of 15 different subunits, Nqo1 to Nqo15. The complex has a L-shaped structure, with the hydrophobic arm (subunits Nqo7, Nqo8 and Nqo10 to Nqo14) embedded in the membrane and the hydrophilic peripheral arm (subunits Nqo1 to Nqo6, Nqo9 and Nqo15) protruding into the bacterial cytoplasm. The hydrophilic domain contains all the redox centers.

The protein resides in the cell inner membrane. The catalysed reaction is a quinone + NADH + 5 H(+)(in) = a quinol + NAD(+) + 4 H(+)(out). In terms of biological role, NDH-1 shuttles electrons from NADH, via FMN and iron-sulfur (Fe-S) centers, to quinones in the respiratory chain. The immediate electron acceptor for the enzyme in this species is menaquinone. Couples the redox reaction to proton translocation (for every two electrons transferred, four hydrogen ions are translocated across the cytoplasmic membrane), and thus conserves the redox energy in a proton gradient required for the synthesis of ATP. The sequence is that of NADH-quinone oxidoreductase subunit 11 (nqo11) from Thermus thermophilus (strain ATCC 27634 / DSM 579 / HB8).